Consider the following 365-residue polypeptide: Probable dual-specificity RNA methyltransferase RlmN (365 aa).

E99 acts as the Proton acceptor in catalysis. The Radical SAM core domain maps to 105–344 (QSYGLSVCVT…CVVRQEHGTD (240 aa)). A disulfide bond links C112 and C349. [4Fe-4S] cluster-binding residues include C119, C123, and C126. Residues 171–172 (GE), S203, 227–229 (SLH), and N305 each bind S-adenosyl-L-methionine. The active-site S-methylcysteine intermediate is C349.

It belongs to the radical SAM superfamily. RlmN family. Requires [4Fe-4S] cluster as cofactor.

The protein localises to the cytoplasm. The enzyme catalyses adenosine(2503) in 23S rRNA + 2 reduced [2Fe-2S]-[ferredoxin] + 2 S-adenosyl-L-methionine = 2-methyladenosine(2503) in 23S rRNA + 5'-deoxyadenosine + L-methionine + 2 oxidized [2Fe-2S]-[ferredoxin] + S-adenosyl-L-homocysteine. It catalyses the reaction adenosine(37) in tRNA + 2 reduced [2Fe-2S]-[ferredoxin] + 2 S-adenosyl-L-methionine = 2-methyladenosine(37) in tRNA + 5'-deoxyadenosine + L-methionine + 2 oxidized [2Fe-2S]-[ferredoxin] + S-adenosyl-L-homocysteine. Functionally, specifically methylates position 2 of adenine 2503 in 23S rRNA and position 2 of adenine 37 in tRNAs. The chain is Probable dual-specificity RNA methyltransferase RlmN from Lactococcus lactis subsp. cremoris (strain SK11).